The sequence spans 179 residues: Negative modulator of initiation of replication (179 aa).

The protein belongs to the SeqA family. As to quaternary structure, homodimer. Polymerizes to form helical filaments.

The protein resides in the cytoplasm. Its function is as follows. Negative regulator of replication initiation, which contributes to regulation of DNA replication and ensures that replication initiation occurs exactly once per chromosome per cell cycle. Binds to pairs of hemimethylated GATC sequences in the oriC region, thus preventing assembly of replication proteins and re-initiation at newly replicated origins. Repression is relieved when the region becomes fully methylated. The chain is Negative modulator of initiation of replication from Vibrio atlanticus (strain LGP32) (Vibrio splendidus (strain Mel32)).